Here is a 605-residue protein sequence, read N- to C-terminus: Inactive LRR receptor-like serine/threonine-protein kinase BIR2 (605 aa).

The first 28 residues, 1 to 28, serve as a signal peptide directing secretion; that stretch reads MKEIGSKPRKLLPLCFIIFLCFCSSVMA. At 29-229 the chain is on the extracellular side; it reads ADEDDIRCLR…CGGLSKKNLG (201 aa). A glycan (N-linked (GlcNAc...) asparagine) is linked at Asn58. 4 LRR repeats span residues 101–125, 127–150, 152–173, and 174–197; these read CASL…LCNW, PFLV…LAKC, FVNS…QFSA, and LGRL…FFSS. A helical membrane pass occupies residues 230–250; that stretch reads IIIAAGVFGAAASMLLAFGIW. Over 251–605 the chain is Cytoplasmic; that stretch reads WYYHLKWTRR…IFDTQENEKV (355 aa). A Phosphoserine; by BAK1 modification is found at Ser271. Phosphothreonine; by BAK1 is present on Thr283. A Phosphoserine; by BAK1 modification is found at Ser286. Thr304 is subject to Phosphothreonine; by BAK1. A Protein kinase domain is found at 307-578; it reads FNSENIIVST…FQAYQSLKAI (272 aa). 313 to 321 lines the ATP pocket; the sequence is IVSTRTGTT. A Phosphoserine; by BAK1 modification is found at Ser330. An ATP-binding site is contributed by Lys335. Position 389 is a phosphoserine; by BAK1 (Ser389). Thr402 carries the phosphothreonine modification. Phosphoserine; by BAK1 occurs at positions 448 and 462. Position 466 is a phosphothreonine; by BAK1 (Thr466). A Phosphotyrosine modification is found at Tyr479. Thr482 carries the phosphothreonine modification. Ser486 bears the Phosphoserine mark. Thr533 is modified (phosphothreonine; by BAK1).

Belongs to the protein kinase superfamily. Ser/Thr protein kinase family. In terms of assembly, interacts constitutively with BAK1, when phosphorylated, thereby preventing interaction with the ligand-binding LRR-RLK FLS2. Upon infection, pathogen-associated molecular patterns (PAMP) perception leads to BIR2 release from the BAK1 complex and enables the recruitment of BAK1 into the FLS2 complex. In terms of processing, phosphorylated by BAK1, this interacts promotes interaction with BAK1.

It is found in the cell membrane. Pseudokinases lacking protein kinase activity and unable to bind ATP-analogs. Negative regulator of pathogen-associated molecular patterns- (PAMP-) triggered immunity by limiting BAK1-receptor complex formation in the absence of ligands. The protein is Inactive LRR receptor-like serine/threonine-protein kinase BIR2 of Arabidopsis thaliana (Mouse-ear cress).